A 462-amino-acid polypeptide reads, in one-letter code: NADH-quinone oxidoreductase subunit N 1 (462 aa).

15 helical membrane-spanning segments follow: residues 4 to 24 (FVVA…VLCL), 32 to 52 (AGFY…WAVA), 60 to 80 (IACF…ALLA), 88 to 108 (FAGD…LLLA), 113 to 133 (WIML…LIAA), 148 to 168 (FLPG…IYAA), 178 to 198 (LAAP…GVGF), 220 to 240 (VAAF…LHVC), 251 to 271 (LWPA…LGAV), 279 to 299 (LLAY…MAVN), 307 to 327 (LFYL…VGAL), 351 to 371 (AGVL…AGFV), 374 to 394 (FLVF…FGII), 416 to 436 (LIAH…ALGV), and 439 to 459 (AGLV…AALF).

This sequence belongs to the complex I subunit 2 family. As to quaternary structure, NDH-1 is composed of 14 different subunits. Subunits NuoA, H, J, K, L, M, N constitute the membrane sector of the complex.

The protein resides in the cell inner membrane. The catalysed reaction is a quinone + NADH + 5 H(+)(in) = a quinol + NAD(+) + 4 H(+)(out). NDH-1 shuttles electrons from NADH, via FMN and iron-sulfur (Fe-S) centers, to quinones in the respiratory chain. The immediate electron acceptor for the enzyme in this species is believed to be ubiquinone. Couples the redox reaction to proton translocation (for every two electrons transferred, four hydrogen ions are translocated across the cytoplasmic membrane), and thus conserves the redox energy in a proton gradient. In Solidesulfovibrio magneticus (strain ATCC 700980 / DSM 13731 / RS-1) (Desulfovibrio magneticus), this protein is NADH-quinone oxidoreductase subunit N 1.